The following is a 268-amino-acid chain: Phosphate import ATP-binding protein PstB (268 aa).

The 242-residue stretch at 22 to 263 (LAVRNLNFYY…PKQQQTQDYI (242 aa)) folds into the ABC transporter domain. 54–61 (GPSGCGKS) is a binding site for ATP.

Belongs to the ABC transporter superfamily. Phosphate importer (TC 3.A.1.7) family. The complex is composed of two ATP-binding proteins (PstB), two transmembrane proteins (PstC and PstA) and a solute-binding protein (PstS).

The protein resides in the cell inner membrane. The catalysed reaction is phosphate(out) + ATP + H2O = ADP + 2 phosphate(in) + H(+). Its function is as follows. Part of the ABC transporter complex PstSACB involved in phosphate import. Responsible for energy coupling to the transport system. This Gluconobacter oxydans (strain 621H) (Gluconobacter suboxydans) protein is Phosphate import ATP-binding protein PstB.